The following is a 290-amino-acid chain: 1D-myo-inositol 2-acetamido-2-deoxy-alpha-D-glucopyranoside deacetylase (290 aa).

Zn(2+) is bound by residues His17, Asp20, and His150.

It belongs to the MshB deacetylase family. The cofactor is Zn(2+).

The catalysed reaction is 1D-myo-inositol 2-acetamido-2-deoxy-alpha-D-glucopyranoside + H2O = 1D-myo-inositol 2-amino-2-deoxy-alpha-D-glucopyranoside + acetate. In terms of biological role, catalyzes the deacetylation of 1D-myo-inositol 2-acetamido-2-deoxy-alpha-D-glucopyranoside (GlcNAc-Ins) in the mycothiol biosynthesis pathway. In Corynebacterium glutamicum (strain R), this protein is 1D-myo-inositol 2-acetamido-2-deoxy-alpha-D-glucopyranoside deacetylase.